Here is a 121-residue protein sequence, read N- to C-terminus: MNALQEDTPPGPSTVFRPPTSSRPLETPHCREIRIGIAGITITLSLCGCANARAPTLRSATADNSESTGFKNVPDLRTDQPKPPSKKRSCDPSEYRVSELKESLITTTPSRPRTAKRRIRL.

Disordered stretches follow at residues Met-1–Pro-28 and Leu-57–Leu-121. The span at Arg-58–Phe-70 shows a compositional bias: polar residues. The segment covering Arg-88 to Glu-102 has biased composition (basic and acidic residues).

Belongs to the gyrovirus apoptin family.

It localises to the host nucleus. In terms of biological role, may act as transcriptional regulator. Induces apoptosis in infected cells. Element of infectious replication cycle. The protein is Apoptin (VP3) of Gallus gallus (Chicken).